Consider the following 298-residue polypeptide: Tryptophan 2,3-dioxygenase (298 aa).

Residues 51–55 (FIIQH), Y113, and R117 each bind substrate. H240 is a binding site for heme. Residue T254 coordinates substrate.

Belongs to the tryptophan 2,3-dioxygenase family. In terms of assembly, homotetramer. Heme serves as cofactor.

The catalysed reaction is L-tryptophan + O2 = N-formyl-L-kynurenine. It participates in amino-acid degradation; L-tryptophan degradation via kynurenine pathway; L-kynurenine from L-tryptophan: step 1/2. In terms of biological role, heme-dependent dioxygenase that catalyzes the oxidative cleavage of the L-tryptophan (L-Trp) pyrrole ring and converts L-tryptophan to N-formyl-L-kynurenine. Catalyzes the oxidative cleavage of the indole moiety. This Xanthomonas euvesicatoria pv. vesicatoria (strain 85-10) (Xanthomonas campestris pv. vesicatoria) protein is Tryptophan 2,3-dioxygenase.